Reading from the N-terminus, the 129-residue chain is Small ribosomal subunit protein uS9 (129 aa).

This sequence belongs to the universal ribosomal protein uS9 family.

In Chlorobium luteolum (strain DSM 273 / BCRC 81028 / 2530) (Pelodictyon luteolum), this protein is Small ribosomal subunit protein uS9.